Here is a 408-residue protein sequence, read N- to C-terminus: Aminoacylase-1 (408 aa).

Zn(2+) is bound at residue His-80. Asp-82 is a catalytic residue. Residue Asp-113 coordinates Zn(2+). Residue Glu-147 is the Proton acceptor of the active site. Zn(2+) is bound by residues Glu-148, Glu-175, and His-373.

It belongs to the peptidase M20A family. As to quaternary structure, homodimer. Interacts with SPHK1. Zn(2+) is required as a cofactor.

The protein localises to the cytoplasm. The enzyme catalyses an N-acyl-L-amino acid + H2O = an L-alpha-amino acid + a carboxylate. It carries out the reaction N-acetyl-L-methionine + H2O = L-methionine + acetate. It catalyses the reaction N-acetyl-L-glutamine + H2O = L-glutamine + acetate. Catalyzes the hydrolysis of N-acetylated amino acids to acetate and free amino acids. This is Aminoacylase-1 (ACY1) from Pongo abelii (Sumatran orangutan).